The chain runs to 150 residues: D-aminoacyl-tRNA deacylase (150 aa).

Residues 137-138 (GP) carry the Gly-cisPro motif, important for rejection of L-amino acids motif.

This sequence belongs to the DTD family. As to quaternary structure, homodimer.

Its subcellular location is the cytoplasm. The enzyme catalyses glycyl-tRNA(Ala) + H2O = tRNA(Ala) + glycine + H(+). It catalyses the reaction a D-aminoacyl-tRNA + H2O = a tRNA + a D-alpha-amino acid + H(+). An aminoacyl-tRNA editing enzyme that deacylates mischarged D-aminoacyl-tRNAs. Also deacylates mischarged glycyl-tRNA(Ala), protecting cells against glycine mischarging by AlaRS. Acts via tRNA-based rather than protein-based catalysis; rejects L-amino acids rather than detecting D-amino acids in the active site. By recycling D-aminoacyl-tRNA to D-amino acids and free tRNA molecules, this enzyme counteracts the toxicity associated with the formation of D-aminoacyl-tRNA entities in vivo and helps enforce protein L-homochirality. The polypeptide is D-aminoacyl-tRNA deacylase (Alkalilimnicola ehrlichii (strain ATCC BAA-1101 / DSM 17681 / MLHE-1)).